We begin with the raw amino-acid sequence, 99 residues long: Malonate decarboxylase acyl carrier protein (99 aa).

Ser-25 is subject to O-(phosphoribosyl dephospho-coenzyme A)serine.

The protein belongs to the MdcC family. Post-translationally, covalently binds the prosthetic group of malonate decarboxylase.

It is found in the cytoplasm. Functionally, subunit of malonate decarboxylase, it is an acyl carrier protein to which acetyl and malonyl thioester residues are bound via a 2'-(5''-phosphoribosyl)-3'-dephospho-CoA prosthetic group and turn over during the catalytic mechanism. The chain is Malonate decarboxylase acyl carrier protein from Pseudomonas savastanoi pv. phaseolicola (strain 1448A / Race 6) (Pseudomonas syringae pv. phaseolicola (strain 1448A / Race 6)).